The sequence spans 195 residues: Protein GrpE (195 aa).

Belongs to the GrpE family. As to quaternary structure, homodimer.

It localises to the cytoplasm. Functionally, participates actively in the response to hyperosmotic and heat shock by preventing the aggregation of stress-denatured proteins, in association with DnaK and GrpE. It is the nucleotide exchange factor for DnaK and may function as a thermosensor. Unfolded proteins bind initially to DnaJ; upon interaction with the DnaJ-bound protein, DnaK hydrolyzes its bound ATP, resulting in the formation of a stable complex. GrpE releases ADP from DnaK; ATP binding to DnaK triggers the release of the substrate protein, thus completing the reaction cycle. Several rounds of ATP-dependent interactions between DnaJ, DnaK and GrpE are required for fully efficient folding. The polypeptide is Protein GrpE (Francisella tularensis subsp. tularensis (strain FSC 198)).